The sequence spans 105 residues: MSISTQITFFEFLTPLVASGQKTITIRDKSESHYVPGTRVEVFTLETQRKVCEIDILAVEPLKFDEINEFHAEQEAIELPKLKALIQEIYPNIDELYVITYQLAK.

One can recognise an ASCH domain in the interval 8–93 (TFFEFLTPLV…ALIQEIYPNI (86 aa)). Lys-22 functions as the Proton acceptor in the catalytic mechanism. Thr-25 functions as the Nucleophile in the catalytic mechanism. Glu-75 functions as the Proton donor in the catalytic mechanism.

This sequence belongs to the N(4)-acetylcytidine amidohydrolase family.

It carries out the reaction N(4)-acetylcytidine + H2O = cytidine + acetate + H(+). The catalysed reaction is N(4)-acetyl-2'-deoxycytidine + H2O = 2'-deoxycytidine + acetate + H(+). It catalyses the reaction N(4)-acetylcytosine + H2O = cytosine + acetate + H(+). Catalyzes the hydrolysis of N(4)-acetylcytidine (ac4C). This Vibrio cholerae serotype O1 (strain ATCC 39315 / El Tor Inaba N16961) protein is N(4)-acetylcytidine amidohydrolase.